A 633-amino-acid chain; its full sequence is MGDLPGSTGGGGGVGGGGNGGGGPTIAGTNGNSTTGPGSSTGSTGLERPPSPARLSHTSEKHPKVTLSELNMLRRHRELCDVVLNVGGRKIFAHRVILSACSSYFCAMFTGELEESRQTEVTIRDIDENAMELLIDFCYTAHIIVEESNVQTLLPAACLLQLVEIQDICCEFLKRQLDPTNCLGIRAFADTHSCRELLRIADKFTQHNFQEVMESEEFLLLPVGQLVDIICSDELNVRSEEQVFNAVMSWLKYNVAERRQHLPQVLQHVRLPLLSPKFLVGTVGSDLLVRSDEACRDLVDEAKNYLLLPQERPLMQGPRTRPRKPTRRGEVLFAVGGWCSGDAIASVERFDPQTNDWKMVAPMSKRRCGVGVAVLNDLLYAVGGHDGQSYLNSIERYDPQTNQWSCDVAPTTSCRTSVGVAVLDGFLYAVGGQDGVQCLNHVERYDPKENKWSKVAPMTTRRLGVAVAVLGGFLYAIGGSDGQCPLNTVERYDPRHNKWVAVSPMSTRRKHLGCAVFNNYIYAVGGRDDCMELSSAERYNPLTNTWSPIVAMTSRRSGVGLAVVNGQLYAVGGFDGSAYLKTIEVYDPETNQWRLCGCMNYRRLGGGVGVMRAPQTENYMWCENSFKQQATSN.

Residues 1–62 (MGDLPGSTGG…ARLSHTSEKH (62 aa)) form a disordered region. Positions 7 to 25 (STGGGGGVGGGGNGGGGPT) are enriched in gly residues. Residues 26–45 (IAGTNGNSTTGPGSSTGSTG) are compositionally biased toward low complexity. Residues 80 to 147 (CDVVLNVGGR…CYTAHIIVEE (68 aa)) enclose the BTB domain. Positions 182–284 (CLGIRAFADT…SPKFLVGTVG (103 aa)) constitute a BACK domain. 6 Kelch repeats span residues 331-377 (VLFA…VLND), 379-425 (LYAV…VLDG), 426-472 (FLYA…VLGG), 474-519 (LYAI…VFNN), 521-566 (IYAV…VVNG), and 567-613 (QLYA…VMRA).

It participates in protein modification; protein ubiquitination. Functionally, probable substrate-specific adapter of an E3 ubiquitin-protein ligase complex which mediates the ubiquitination and subsequent proteasomal degradation of target proteins. May have a role in synapse differentiation and growth. This is Kelch-like protein diablo from Drosophila ananassae (Fruit fly).